The chain runs to 376 residues: MLDLIQTRRALHQIPEIGLEEFKTQAYLLDVIEKLTTGKDFVQIRTWRTGILVYLQGSQPERTIGWRTDIDGLPIVEQTGLPFASQHQGRMHACGHDFHMTIALGCLERALEEQPKNNLLFLFQPAEENEAGGMLMYEDGAFGDWLPNQFYGLHVRPDLKVGQIATNTHTLFAGTCEVKIRFKGKGGHAAFPHEANDALVAASYFVTQVQSVVSRNVNPIEGAVVTFGVFQAGTTNNVITDTAFLHGTIRALTQDMSLLVQKRVKTVAEGVAAAFDMEVEVELKQGGYLPVENNPALARELMDFFDEKDGIELIDIEPAMTGEDFGYLLSKVDGVMFWLGIDSPYALHHPQMSPKEEVLAIGVAAVSSFLKKKAAE.

Asp69 is a catalytic residue. Glu128 acts as the Proton acceptor in catalysis.

The protein belongs to the peptidase M20A family. N-acetyldiaminopimelate deacetylase subfamily.

It catalyses the reaction N-acetyl-(2S,6S)-2,6-diaminopimelate + H2O = (2S,6S)-2,6-diaminopimelate + acetate. Its pathway is amino-acid biosynthesis; L-lysine biosynthesis via DAP pathway; LL-2,6-diaminopimelate from (S)-tetrahydrodipicolinate (acetylase route): step 3/3. Functionally, catalyzes the conversion of N-acetyl-diaminopimelate to diaminopimelate and acetate. This chain is N-acetyldiaminopimelate deacetylase, found in Streptococcus pneumoniae (strain CGSP14).